The chain runs to 518 residues: Prosaposin (518 aa).

An N-terminal signal peptide occupies residues 1–17 (MARRLLTLLGLLAAAVA). Residues 18-60 (SPVLWQKDCAKGPEVWCQSLRTASQCGAVKHCQQNVWSKPAVN) constitute a propeptide that is removed on maturation. The 41-residue stretch at 19 to 59 (PVLWQKDCAKGPEVWCQSLRTASQCGAVKHCQQNVWSKPAV) folds into the Saposin A-type 1 domain. Saposin B-type domains are found at residues 60-143 (NSIP…QSLQ), 193-277 (TEDV…PSVK), 307-388 (TFSV…AANK), and 399-480 (AGGF…GAAK). Disulfide bonds link C64-C139, C67-C133, and C95-C107. A glycan (N-linked (GlcNAc...) asparagine) is linked at N81. The propeptide occupies 144–193 (KHLAAMKLQKQLQSNKIPELDFSELTSPFMANVPLLLYPQDKPKQKSKAT). 3 disulfide bridges follow: C197/C273, C200/C267, and C229/C240. N-linked (GlcNAc...) asparagine glycosylation is present at N214. A propeptide spanning residues 277-306 (KSVPLQTLVPAQVVHEVKMETVEKATVQEK) is cleaved from the precursor. 3 cysteine pairs are disulfide-bonded: C311/C384, C314/C378, and C342/C353. N328 is a glycosylation site (N-linked (GlcNAc...) asparagine). A propeptide spanning residues 388-398 (KPPQQPVVVKP) is cleaved from the precursor. 3 disulfides stabilise this stretch: C403/C476, C406/C470, and C434/C445. N420 carries N-linked (GlcNAc...) asparagine glycosylation. Positions 480 to 518 (KKPLLGEDACVWGPGYWCKNMETAAQCNAVDHCRRHVWN) are excised as a propeptide. A Saposin A-type 2 domain is found at 482-518 (PLLGEDACVWGPGYWCKNMETAAQCNAVDHCRRHVWN).

In terms of assembly, saposin-B is a homodimer. This precursor is proteolytically processed to 4 small peptides, which are similar to each other and are sphingolipid hydrolase activator proteins.

The protein localises to the lysosome. It is found in the secreted. Its function is as follows. The lysosomal degradation of sphingolipids takes place by the sequential action of specific hydrolases. Some of these enzymes require specific low-molecular mass, non-enzymatic proteins: the sphingolipids activator proteins (coproteins). In terms of biological role, saposin-A and saposin-C stimulate the hydrolysis of glucosylceramide by beta-glucosylceramidase (EC 3.2.1.45) and galactosylceramide by beta-galactosylceramidase (EC 3.2.1.46). Saposin-C apparently acts by combining with the enzyme and acidic lipid to form an activated complex, rather than by solubilizing the substrate. Functionally, saposin-B stimulates the hydrolysis of galacto-cerebroside sulfate by arylsulfatase A (EC 3.1.6.8), GM1 gangliosides by beta-galactosidase (EC 3.2.1.23) and globotriaosylceramide by alpha-galactosidase A (EC 3.2.1.22). Saposin-B forms a solubilizing complex with the substrates of the sphingolipid hydrolases. Saposin-D is a specific sphingomyelin phosphodiesterase activator (EC 3.1.4.12). This chain is Prosaposin (PSAP), found in Gallus gallus (Chicken).